Consider the following 887-residue polypeptide: Endoglucanase 1 (887 aa).

Residues 1–55 form the signal peptide; it reads MRLVNSLGRRKILLILAVIVAFSTVLLFAKLWGRKTSSTLDEVGSKTHGDLTAEN. Residues 40-66 are disordered; the sequence is LDEVGSKTHGDLTAENKNGGYLPEEEI. Residues 43 to 53 show a composition bias toward basic and acidic residues; it reads VGSKTHGDLTA. Positions 56–518 are catalytic; sequence KNGGYLPEEE…AKMYKLYGGS (463 aa). Aspartate 131 functions as the Nucleophile in the catalytic mechanism. The tract at residues 441–460 is disordered; that stretch reads ENPPKRPHHRTAHGSWADSQ. Active-site residues include histidine 448, aspartate 486, and glutamate 495. The CBM3 1 domain maps to 529 to 684; that stretch reads VPEDEIFVEA…GVLVFGREPG (156 aa). Residues 684–730 are disordered; sequence GSASKSTSKDNGLSKATPTVKTESQPTAKHTQNPASDFKTPANQNSV. The span at 686-729 shows a compositional bias: polar residues; that stretch reads ASKSTSKDNGLSKATPTVKTESQPTAKHTQNPASDFKTPANQNS. In terms of domain architecture, CBM3 2 spans 736 to 887; the sequence is IKGEVVLQYA…SNKLVYGKEP (152 aa).

The protein belongs to the glycosyl hydrolase 9 (cellulase E) family.

It carries out the reaction Endohydrolysis of (1-&gt;4)-beta-D-glucosidic linkages in cellulose, lichenin and cereal beta-D-glucans.. It functions in the pathway glycan metabolism; cellulose degradation. Its function is as follows. This enzyme catalyzes the endohydrolysis of 1,4-beta-glucosidic linkages in cellulose, lichenin and cereal beta-D-glucans. Principally active against barley beta-glucan. The chain is Endoglucanase 1 (celI) from Acetivibrio thermocellus (strain ATCC 27405 / DSM 1237 / JCM 9322 / NBRC 103400 / NCIMB 10682 / NRRL B-4536 / VPI 7372) (Clostridium thermocellum).